The following is a 358-amino-acid chain: 3-dehydroquinate synthase (358 aa).

NAD(+) is bound by residues 70–75 (DGEKFK), 104–108 (GVVGD), 128–129 (TT), Lys141, Lys150, and 168–171 (CLQT). Zn(2+) contacts are provided by Glu183, His246, and His263.

The protein belongs to the sugar phosphate cyclases superfamily. Dehydroquinate synthase family. The cofactor is Co(2+). Zn(2+) is required as a cofactor. Requires NAD(+) as cofactor.

It is found in the cytoplasm. The enzyme catalyses 7-phospho-2-dehydro-3-deoxy-D-arabino-heptonate = 3-dehydroquinate + phosphate. Its pathway is metabolic intermediate biosynthesis; chorismate biosynthesis; chorismate from D-erythrose 4-phosphate and phosphoenolpyruvate: step 2/7. Catalyzes the conversion of 3-deoxy-D-arabino-heptulosonate 7-phosphate (DAHP) to dehydroquinate (DHQ). The sequence is that of 3-dehydroquinate synthase from Shewanella frigidimarina (strain NCIMB 400).